The sequence spans 281 residues: Aldo-keto reductase MAP_3007 (281 aa).

Residue tyrosine 56 is the Proton donor of the active site. NADPH-binding residues include leucine 196, isoleucine 234, arginine 236, serine 237, alanine 238, serine 245, and arginine 272.

This sequence belongs to the aldo/keto reductase family.

This Mycolicibacterium paratuberculosis (strain ATCC BAA-968 / K-10) (Mycobacterium paratuberculosis) protein is Aldo-keto reductase MAP_3007.